Here is a 358-residue protein sequence, read N- to C-terminus: MEAAVGDGEGGGGGGGRGKRGRGGGGGEMVEAVWGQTGSTASRIYRVRATGGKDRHSKVYTAKGIRDRRVRLSVATAIQFYDLQDRLGFDQPSKAIEWLINAASPAIDTLPSLDPAAFAAIPHAAAADAAPTRRRSQQQQQQLSNKSGCSSTSETSKGSDKEVTVASAPAQAASFTELLIAGVAASSAGGGAIGNGADCVGIAHPGKGGAEGASTYGFSAASSFGDAPPIGMVPAPPFNFSAPGADMAAHYSLAQDQLAAPPPPAGGDYNLNFSMSSGFLGANRGTLQSNSPSNMSGHHHHHHQQQLQRLDGSTISFLLGHAAAAAHPAASEGQITSTAALQLWDGFRHSGMKEKSKN.

The segment at 1–29 is disordered; it reads MEAAVGDGEGGGGGGGRGKRGRGGGGGEM. Positions 7–16 are enriched in gly residues; that stretch reads DGEGGGGGGG. Residues 52–110 form the TCP domain; sequence GKDRHSKVYTAKGIRDRRVRLSVATAIQFYDLQDRLGFDQPSKAIEWLINAASPAIDTL. Disordered regions lie at residues 127–163 and 282–308; these read ADAAPTRRRSQQQQQQLSNKSGCSSTSETSKGSDKEV and ANRGTLQSNSPSNMSGHHHHHHQQQLQ. Composition is skewed to polar residues over residues 143-156 and 285-296; these read LSNKSGCSSTSETS and GTLQSNSPSNMS.

Forms homodimers and heterodimers.

It localises to the nucleus. Functionally, transcription activator. Binds the promoter core sequence 5'-GGNCC-3'. This is Transcription factor PCF6 (PCF6) from Oryza sativa subsp. indica (Rice).